The primary structure comprises 1044 residues: Pre-mRNA-splicing factor ATP-dependent RNA helicase DHX16 (1044 aa).

Disordered stretches follow at residues 101 to 210 and 374 to 394; these read EDSE…AYEE and LQGNEEPSAPPTSTQAQQKES. Phosphoserine occurs at positions 103, 106, and 107. The segment covering 119-130 has biased composition (basic residues); sequence QKKRKKRKHLRK. The span at 134–143 shows a compositional bias: acidic residues; the sequence is EEEEEEEEEA. The residue at position 163 (Ser-163) is a Phosphoserine. Residues 169 to 210 are compositionally biased toward basic and acidic residues; that stretch reads RTERERLQDLEERDAFAERVRQRDKDRTRNVLERSDKKAYEE. Positions 412–576 constitute a Helicase ATP-binding domain; sequence LAAIANHQVL…FDDAPVFRIP (165 aa). 425 to 432 contacts ATP; sequence GETGSGKT. The DEAH box signature appears at 523-526; it reads DEAH. Residues 601 to 774 form the Helicase C-terminal domain; the sequence is SVLQIHVTQP…NVVLLLKSLG (174 aa). Thr-715 carries the phosphothreonine modification.

It belongs to the DEAD box helicase family. DEAH subfamily. DDX16/PRP8 sub-subfamily. Component of pre-catalytic spliceosome complexes. Component of the minor spliceosome, which splices U12-type introns. Interacts with GPKOW. Interacts with TRIM6. Interacts with RIGI.

It localises to the nucleus. Its subcellular location is the nucleoplasm. It is found in the cytoplasm. The catalysed reaction is ATP + H2O = ADP + phosphate + H(+). In terms of biological role, required for pre-mRNA splicing as a component of the spliceosome. Contributes to pre-mRNA splicing after spliceosome formation and prior to the first transesterification reaction. As a component of the minor spliceosome, involved in the splicing of U12-type introns in pre-mRNAs. Also plays a role in innate antiviral response by acting as a pattern recognition receptor sensing splicing signals in viral RNA. Mechanistically, TRIM6 promotes the interaction between unanchored 'Lys-48'-polyubiquitin chains and DHX16, leading to DHX16 interaction with RIGI and ssRNA to amplify RIGI-dependent innate antiviral immune responses. The protein is Pre-mRNA-splicing factor ATP-dependent RNA helicase DHX16 (DHX16) of Pan troglodytes (Chimpanzee).